We begin with the raw amino-acid sequence, 186 residues long: Elongation factor P (186 aa).

Belongs to the elongation factor P family.

The protein localises to the cytoplasm. It functions in the pathway protein biosynthesis; polypeptide chain elongation. In terms of biological role, involved in peptide bond synthesis. Stimulates efficient translation and peptide-bond synthesis on native or reconstituted 70S ribosomes in vitro. Probably functions indirectly by altering the affinity of the ribosome for aminoacyl-tRNA, thus increasing their reactivity as acceptors for peptidyl transferase. In Prochlorococcus marinus (strain MIT 9303), this protein is Elongation factor P.